Reading from the N-terminus, the 391-residue chain is Mannonate dehydratase (391 aa).

A disordered region spans residues 334–359 (ERRRERDGGPRLPLRPDHGHHLLDDL).

This sequence belongs to the mannonate dehydratase family. It depends on Fe(2+) as a cofactor. Mn(2+) is required as a cofactor.

It carries out the reaction D-mannonate = 2-dehydro-3-deoxy-D-gluconate + H2O. It participates in carbohydrate metabolism; pentose and glucuronate interconversion. Its function is as follows. Catalyzes the dehydration of D-mannonate. This is Mannonate dehydratase from Chromohalobacter salexigens (strain ATCC BAA-138 / DSM 3043 / CIP 106854 / NCIMB 13768 / 1H11).